A 339-amino-acid polypeptide reads, in one-letter code: Uroporphyrinogen decarboxylase (339 aa).

Residues 21–25, aspartate 71, tyrosine 147, serine 202, and histidine 315 contribute to the substrate site; that span reads RQAGR.

It belongs to the uroporphyrinogen decarboxylase family. Homodimer.

Its subcellular location is the cytoplasm. The catalysed reaction is uroporphyrinogen III + 4 H(+) = coproporphyrinogen III + 4 CO2. Its pathway is porphyrin-containing compound metabolism; protoporphyrin-IX biosynthesis; coproporphyrinogen-III from 5-aminolevulinate: step 4/4. Catalyzes the decarboxylation of four acetate groups of uroporphyrinogen-III to yield coproporphyrinogen-III. This is Uroporphyrinogen decarboxylase from Helicobacter pylori (strain P12).